The sequence spans 140 residues: Hexon-interlacing protein (140 aa).

A coiled-coil region spans residues 100–127 (LTALLAQLDSLTRELNVVSQQLLDLRQQ).

Belongs to the adenoviridae hexon-interlacing protein family. As to quaternary structure, homotrimer. Interacts with hexon protein; this interaction tethers the hexons together. Self-interacts with adjacent proteins. Interacts with kinesin light chain KLC1; this interaction leads to capsid disruption at the nuclear pore complex during virus entry into host cell.

It localises to the virion. It is found in the host nucleus. Its function is as follows. Structural component of the virion that acts as a cement protein on the capsid exterior and forms triskelion structures consisting of three molecules that stabilize three hexon trimers at the center of each icosahedral facet and fixes the peripentonal hexons. Dispensable for assembly. During virus entry, recruits the anterograde motor kinesin-1 to the capsid docked at the nuclear pore complex thereby subjecting the docked capsid to a pulling force. The resulting tension leads to capsid disruption, dispersion of capsid fragments toward cell periphery and eventually viral DNA entry into the host nucleus. This Human adenovirus C serotype 5 (HAdV-5) protein is Hexon-interlacing protein.